The primary structure comprises 164 residues: Replication restart protein DnaT (164 aa).

This sequence belongs to the DnaT family. Homooligomerizes. Interacts with PriB. Component of the replication restart primosome. Primosome assembly occurs via a 'hand-off' mechanism. PriA binds to replication forks, subsequently PriB then DnaT bind; DnaT then displaces ssDNA to generate the helicase loading substrate.

Involved in the restart of stalled replication forks, which reloads the replicative helicase on sites other than the origin of replication. Can function in multiple replication restart pathways. Displaces ssDNA from a PriB-ssDNA complex. Probably forms a spiral filament on ssDNA. This Buchnera aphidicola subsp. Acyrthosiphon pisum (strain 5A) protein is Replication restart protein DnaT.